A 229-amino-acid chain; its full sequence is Ras-related protein Rab-33B (229 aa).

GTP is bound by residues Asn43, Val44, Gly45, Lys46, Thr47, Cys48, Thr62, and Thr65. Residue Thr47 participates in Mg(2+) binding. The Switch 1 motif lies at 56 to 68 (GRFPDRTEATIGV). 2 residues coordinate Mg(2+): Thr65 and Asp88. The short motif at 89-108 (TAGQERFRKSMVQHYYRNVH) is the Switch 2 element. The GTP site is built by Gly91, Asn148, Lys149, Asp151, Ala179, and Lys180. Residues Cys227 and Cys229 are each lipidated (S-geranylgeranyl cysteine). The residue at position 229 (Cys229) is a Cysteine methyl ester.

It belongs to the small GTPase superfamily. Rab family. Interacts (GTP- and GDP-bound forms) with ATG16L1; the complex consists of a tetramer where two RAB33B molecules bind independently one molecule of the ATG16L1 homodimer; the interaction promotes ATG12-ATG5-ATG16L1 complex recruitment to phagophores. Interacts with ATG16L2; however interaction is approximately hundred times lower than for ATG16L1. Interacts with RIC1 (via C-terminus domain); the interaction is direct with a preference for RAB33B-GTP. Interacts with RGP1. Mg(2+) serves as cofactor. Post-translationally, prenylated. As to expression, ubiquitous.

It is found in the golgi apparatus membrane. Its subcellular location is the golgi apparatus. It localises to the cis-Golgi network. The protein resides in the preautophagosomal structure membrane. The enzyme catalyses GTP + H2O = GDP + phosphate + H(+). Regulated by guanine nucleotide exchange factors (GEFs) which promote the exchange of bound GDP for free GTP. Regulated by GTPase activating proteins (GAPs) such as SGSM2 which increase the GTP hydrolysis activity. Inhibited by GDP dissociation inhibitors (GDIs). In terms of biological role, the small GTPases Rab are key regulators of intracellular membrane trafficking, from the formation of transport vesicles to their fusion with membranes. Rabs cycle between an inactive GDP-bound form and an active GTP-bound form that is able to recruit to membranes different sets of downstream effectors directly responsible for vesicle formation, movement, tethering and fusion. RAB33B acts, in coordination with RAB6A, to regulate intra-Golgi retrograde trafficking. Participates in autophagosome formation by recruiting the ATG12-ATG5-ATG16L1 complex to phagophores, probably in a nucleotide-independent manner. The polypeptide is Ras-related protein Rab-33B (Mus musculus (Mouse)).